A 127-amino-acid polypeptide reads, in one-letter code: Large ribosomal subunit protein bL12 (127 aa).

This sequence belongs to the bacterial ribosomal protein bL12 family. Homodimer. Part of the ribosomal stalk of the 50S ribosomal subunit. Forms a multimeric L10(L12)X complex, where L10 forms an elongated spine to which 2 to 4 L12 dimers bind in a sequential fashion. Binds GTP-bound translation factors.

Forms part of the ribosomal stalk which helps the ribosome interact with GTP-bound translation factors. Is thus essential for accurate translation. The chain is Large ribosomal subunit protein bL12 from Sinorhizobium fredii (strain NBRC 101917 / NGR234).